The primary structure comprises 274 residues: Thiamine kinase (274 aa).

Belongs to the thiamine kinase family.

It catalyses the reaction thiamine + ATP = thiamine phosphate + ADP + H(+). It functions in the pathway cofactor biosynthesis; thiamine diphosphate biosynthesis; thiamine phosphate from thiamine: step 1/1. Its function is as follows. Catalyzes the ATP-dependent phosphorylation of thiamine to thiamine phosphate. Is involved in thiamine salvage. The sequence is that of Thiamine kinase from Escherichia coli O139:H28 (strain E24377A / ETEC).